The following is a 632-amino-acid chain: tRNA uridine 5-carboxymethylaminomethyl modification enzyme MnmG (632 aa).

FAD is bound by residues 15-20 (GAGHAG), Ile127, and Ser182. 276 to 290 (GPRYCPSIEDKIVRF) provides a ligand contact to NAD(+). Gln373 contributes to the FAD binding site.

This sequence belongs to the MnmG family. Homodimer. Heterotetramer of two MnmE and two MnmG subunits. FAD serves as cofactor.

Its subcellular location is the cytoplasm. Functionally, NAD-binding protein involved in the addition of a carboxymethylaminomethyl (cmnm) group at the wobble position (U34) of certain tRNAs, forming tRNA-cmnm(5)s(2)U34. In Streptococcus pyogenes serotype M1, this protein is tRNA uridine 5-carboxymethylaminomethyl modification enzyme MnmG.